A 293-amino-acid polypeptide reads, in one-letter code: MFSGSIVALVTPLDTDGEVDYNSLKSLVDYHIKAGTNGIVAVGTTGESATLSVEEHVKLVMKTLEFADGRIPVIAGTGANATHEAVTFSKLFHDSGVAGCLSVTPYYNKPTQEGLFQHYKAISEATDIPQILYNVPGRTAVDLLPETVARLAELDNIVALKDATGDLDRVAITRELCGENFIQLSGDDATALDFVKLGGHGVISVTSNIAAKDMATMFALAAQGKFEEAEIINQRLMPLHNDLFVEANPIPVKWAAHRLGMITHSDIRLPLTELSLSAQPTVEQALKSAGLLK.

T45 provides a ligand contact to pyruvate. Y133 acts as the Proton donor/acceptor in catalysis. The Schiff-base intermediate with substrate role is filled by K161. Residue I203 coordinates pyruvate.

The protein belongs to the DapA family. As to quaternary structure, homotetramer; dimer of dimers.

It localises to the cytoplasm. The enzyme catalyses L-aspartate 4-semialdehyde + pyruvate = (2S,4S)-4-hydroxy-2,3,4,5-tetrahydrodipicolinate + H2O + H(+). It functions in the pathway amino-acid biosynthesis; L-lysine biosynthesis via DAP pathway; (S)-tetrahydrodipicolinate from L-aspartate: step 3/4. Its function is as follows. Catalyzes the condensation of (S)-aspartate-beta-semialdehyde [(S)-ASA] and pyruvate to 4-hydroxy-tetrahydrodipicolinate (HTPA). The sequence is that of 4-hydroxy-tetrahydrodipicolinate synthase from Aliivibrio fischeri (strain ATCC 700601 / ES114) (Vibrio fischeri).